The sequence spans 207 residues: Small ribosomal subunit protein uS4c (207 aa).

Residues 92–155 (MRLDNILFRL…TYQSILSKRI (64 aa)) form the S4 RNA-binding domain.

This sequence belongs to the universal ribosomal protein uS4 family. As to quaternary structure, part of the 30S ribosomal subunit. Contacts protein S5. The interaction surface between S4 and S5 is involved in control of translational fidelity.

Its subcellular location is the plastid. It is found in the chloroplast. One of the primary rRNA binding proteins, it binds directly to 16S rRNA where it nucleates assembly of the body of the 30S subunit. Functionally, with S5 and S12 plays an important role in translational accuracy. The sequence is that of Small ribosomal subunit protein uS4c (rps4) from Equisetum scirpoides (Dwarf-scouring rush).